A 491-amino-acid polypeptide reads, in one-letter code: Aspartyl/glutamyl-tRNA(Asn/Gln) amidotransferase subunit B (491 aa).

It belongs to the GatB/GatE family. GatB subfamily. As to quaternary structure, heterotrimer of A, B and C subunits.

It catalyses the reaction L-glutamyl-tRNA(Gln) + L-glutamine + ATP + H2O = L-glutaminyl-tRNA(Gln) + L-glutamate + ADP + phosphate + H(+). It carries out the reaction L-aspartyl-tRNA(Asn) + L-glutamine + ATP + H2O = L-asparaginyl-tRNA(Asn) + L-glutamate + ADP + phosphate + 2 H(+). In terms of biological role, allows the formation of correctly charged Asn-tRNA(Asn) or Gln-tRNA(Gln) through the transamidation of misacylated Asp-tRNA(Asn) or Glu-tRNA(Gln) in organisms which lack either or both of asparaginyl-tRNA or glutaminyl-tRNA synthetases. The reaction takes place in the presence of glutamine and ATP through an activated phospho-Asp-tRNA(Asn) or phospho-Glu-tRNA(Gln). This Burkholderia cenocepacia (strain HI2424) protein is Aspartyl/glutamyl-tRNA(Asn/Gln) amidotransferase subunit B.